Here is a 563-residue protein sequence, read N- to C-terminus: Lipase 2 (563 aa).

An N-terminal signal peptide occupies residues 1–19 (MVSKSLFLAAAVNLAGVLA). A Pyrrolidone carboxylic acid modification is found at Gln-20. Cys-80 and Cys-124 are disulfide-bonded. Residue Ser-236 is the Acyl-ester intermediate of the active site. Cys-295 and Cys-307 are disulfide-bonded. N-linked (GlcNAc...) asparagine glycosylation occurs at Asn-302. Glu-373 acts as the Charge relay system in catalysis. Residue Asn-383 is glycosylated (N-linked (GlcNAc...) asparagine). His-482 acts as the Charge relay system in catalysis.

It belongs to the type-B carboxylesterase/lipase family. Monomer.

Its subcellular location is the secreted. It carries out the reaction a triacylglycerol + H2O = a diacylglycerol + a fatty acid + H(+). Functionally, hydrolyzes all ester bonds in triglyceride and displays a high affinity for triolein. For unsaturated substrates having long fatty acyl chains (C18:2 cis-9, cis-12 and C18:3 cis-9, cis-12, cis-15) GCL I shows higher specific activity than GCL II, whereas GCL II shows higher specific activity against saturated substrates having short fatty acid chains (C8, C10, C12 and C14). The polypeptide is Lipase 2 (LIP2) (Geotrichum candidum (Oospora lactis)).